The primary structure comprises 221 residues: Putative N-acetylmannosamine-6-phosphate 2-epimerase (221 aa).

It belongs to the NanE family.

It carries out the reaction an N-acyl-D-glucosamine 6-phosphate = an N-acyl-D-mannosamine 6-phosphate. It functions in the pathway amino-sugar metabolism; N-acetylneuraminate degradation; D-fructose 6-phosphate from N-acetylneuraminate: step 3/5. Converts N-acetylmannosamine-6-phosphate (ManNAc-6-P) to N-acetylglucosamine-6-phosphate (GlcNAc-6-P). This is Putative N-acetylmannosamine-6-phosphate 2-epimerase from Clostridium perfringens (strain ATCC 13124 / DSM 756 / JCM 1290 / NCIMB 6125 / NCTC 8237 / Type A).